The following is a 187-amino-acid chain: Elongation factor P (187 aa).

It belongs to the elongation factor P family.

It localises to the cytoplasm. The protein operates within protein biosynthesis; polypeptide chain elongation. Its function is as follows. Involved in peptide bond synthesis. Stimulates efficient translation and peptide-bond synthesis on native or reconstituted 70S ribosomes in vitro. Probably functions indirectly by altering the affinity of the ribosome for aminoacyl-tRNA, thus increasing their reactivity as acceptors for peptidyl transferase. The protein is Elongation factor P of Helicobacter pylori (strain G27).